The chain runs to 281 residues: sn-glycerol-3-phosphate transport system permease protein UgpE (281 aa).

6 consecutive transmembrane segments (helical) span residues 14–34 (IMLI…FVAA), 85–105 (FAIT…IVYF), 113–133 (FFWL…FPTI), 142–162 (LDSY…TFLF), 201–221 (AALF…PILI), and 247–267 (WNQV…VVLL). Residues 77–268 (LLNSFVMAFA…IPPVVVVLLM (192 aa)) enclose the ABC transmembrane type-1 domain.

It belongs to the binding-protein-dependent transport system permease family. UgpAE subfamily. In terms of assembly, the complex is composed of two ATP-binding proteins (UgpC), two transmembrane proteins (UgpA and UgpE) and a solute-binding protein (UgpB).

It is found in the cell inner membrane. Its function is as follows. Part of the ABC transporter complex UgpBAEC involved in sn-glycerol-3-phosphate (G3P) import. Probably responsible for the translocation of the substrate across the membrane. In Yersinia pestis bv. Antiqua (strain Antiqua), this protein is sn-glycerol-3-phosphate transport system permease protein UgpE (ugpE).